We begin with the raw amino-acid sequence, 370 residues long: Protein-glutamate methylesterase/protein-glutamine glutaminase of group 1 operon (370 aa).

Residues 4-121 enclose the Response regulatory domain; the sequence is KVLVVDDSGF…SRNPDKVKQL (118 aa). Asp55 carries the 4-aspartylphosphate modification. The span at 150–180 shows a compositional bias: low complexity; the sequence is PASTFTSQAQTRPAAPARAAAPTPAASQSPA. Positions 150–183 are disordered; the sequence is PASTFTSQAQTRPAAPARAAAPTPAASQSPAPKR. Residues 179-370 form the CheB-type methylesterase domain; that stretch reads PAPKRKPYKL…IGKHLVEACV (192 aa). Residues Ser194, His221, and Asp314 contribute to the active site.

It belongs to the CheB family. Phosphorylated by CheA. Phosphorylation of the N-terminal regulatory domain activates the methylesterase activity.

The protein localises to the cytoplasm. The catalysed reaction is [protein]-L-glutamate 5-O-methyl ester + H2O = L-glutamyl-[protein] + methanol + H(+). It carries out the reaction L-glutaminyl-[protein] + H2O = L-glutamyl-[protein] + NH4(+). Functionally, involved in chemotaxis. Part of a chemotaxis signal transduction system that modulates chemotaxis in response to various stimuli. Catalyzes the demethylation of specific methylglutamate residues introduced into the chemoreceptors (methyl-accepting chemotaxis proteins or MCP) by CheR. Also mediates the irreversible deamidation of specific glutamine residues to glutamic acid. This Pseudomonas putida (strain ATCC 47054 / DSM 6125 / CFBP 8728 / NCIMB 11950 / KT2440) protein is Protein-glutamate methylesterase/protein-glutamine glutaminase of group 1 operon.